Consider the following 130-residue polypeptide: Dihydroneopterin aldolase (130 aa).

Residues Glu22, Tyr54, and Ile73–Glu74 each bind substrate. Lys100 serves as the catalytic Proton donor/acceptor.

It belongs to the DHNA family.

The enzyme catalyses 7,8-dihydroneopterin = 6-hydroxymethyl-7,8-dihydropterin + glycolaldehyde. Its pathway is cofactor biosynthesis; tetrahydrofolate biosynthesis; 2-amino-4-hydroxy-6-hydroxymethyl-7,8-dihydropteridine diphosphate from 7,8-dihydroneopterin triphosphate: step 3/4. Functionally, catalyzes the conversion of 7,8-dihydroneopterin to 6-hydroxymethyl-7,8-dihydropterin. This Methylorubrum extorquens (strain ATCC 14718 / DSM 1338 / JCM 2805 / NCIMB 9133 / AM1) (Methylobacterium extorquens) protein is Dihydroneopterin aldolase (folB).